The following is a 920-amino-acid chain: Isoleucine--tRNA ligase (920 aa).

The short motif at 58-68 (PYANGHLHLGH) is the 'HIGH' region element. Glu569 provides a ligand contact to L-isoleucyl-5'-AMP. A 'KMSKS' region motif is present at residues 610-614 (KMSKS). Lys613 serves as a coordination point for ATP. Zn(2+)-binding residues include Cys895, Cys898, Cys910, and Cys913.

Belongs to the class-I aminoacyl-tRNA synthetase family. IleS type 1 subfamily. In terms of assembly, monomer. Requires Zn(2+) as cofactor.

It is found in the cytoplasm. The catalysed reaction is tRNA(Ile) + L-isoleucine + ATP = L-isoleucyl-tRNA(Ile) + AMP + diphosphate. Catalyzes the attachment of isoleucine to tRNA(Ile). As IleRS can inadvertently accommodate and process structurally similar amino acids such as valine, to avoid such errors it has two additional distinct tRNA(Ile)-dependent editing activities. One activity is designated as 'pretransfer' editing and involves the hydrolysis of activated Val-AMP. The other activity is designated 'posttransfer' editing and involves deacylation of mischarged Val-tRNA(Ile). This chain is Isoleucine--tRNA ligase, found in Helicobacter pylori (strain G27).